The chain runs to 1547 residues: Vacuolar membrane-associated protein IML1 (1547 aa).

Disordered regions lie at residues 489-517 and 597-632; these read HAPT…PAAS and LPFA…VERR. The span at 608 to 618 shows a compositional bias: polar residues; it reads STSTLSQSPTY. The DEP domain occupies 1018-1093; it reads PKGGIRFFDR…DGHYFYQLKS (76 aa). Residues 1393-1547 form a disordered region; the sequence is NLSPEASPGT…DKGKEVEDDK (155 aa). The span at 1419–1450 shows a compositional bias: basic and acidic residues; that stretch reads IEAKMEGRVESPQVEWREDVEIAPEVEHKGGA. Composition is skewed to acidic residues over residues 1451-1464 and 1482-1494; these read DGDE…EKSE and QDGE…ENEN. Basic and acidic residues predominate over residues 1495–1547; sequence ENSKDNKANETTSEVKEVPAGVEIEHKEHVEEDKSDGPEPKKEDKGKEVEDDK.

The protein belongs to the IML1 family.

The protein localises to the vacuole membrane. This is Vacuolar membrane-associated protein IML1 (IML1) from Yarrowia lipolytica (strain CLIB 122 / E 150) (Yeast).